Reading from the N-terminus, the 609-residue chain is Kelch-like protein 20 (609 aa).

The region spanning 68–135 is the BTB domain; sequence CDVVLVVGAK…AYTSQITVEE (68 aa). The 103-residue stretch at 170-272 folds into the BACK domain; that stretch reads CLGIRAFADT…SPKFLVGTVG (103 aa). Kelch repeat units lie at residues 319-365, 367-413, 414-460, 462-507, 509-554, and 556-601; these read VLFA…VLDD, LYAV…VLGG, FLYA…VLGG, LYAV…VYQD, IYAV…VVNG, and LMAV…VIKM.

In terms of assembly, component of the BCR(KLHL20) E3 ubiquitin ligase complex, at least composed of CUL3, KLHL20 and RBX1. Interacts with PDZ-RhoGEF/ARHGEF11, DAPK1, PML and CORO7. Interacts with F-actin. Interacts with IFN-gamma (IFNG). Interacts (via kelch repeats) with IVNS1ABP (via kelch repeats); this interaction blocks the assembly of CUL3-KLHL20 complex.

The protein localises to the cytoplasm. The protein resides in the perinuclear region. It is found in the nucleus. Its subcellular location is the golgi apparatus. It localises to the trans-Golgi network. The protein localises to the cell projection. The protein resides in the axon. It is found in the dendrite. Its pathway is protein modification; protein ubiquitination. In terms of biological role, substrate-specific adapter of a BCR (BTB-CUL3-RBX1) E3 ubiquitin-protein ligase complex involved in interferon response and anterograde Golgi to endosome transport. The BCR(KLHL20) E3 ubiquitin ligase complex mediates the ubiquitination of DAPK1, leading to its degradation by the proteasome, thereby acting as a negative regulator of apoptosis. The BCR(KLHL20) E3 ubiquitin ligase complex also specifically mediates 'Lys-33'-linked ubiquitination. Involved in anterograde Golgi to endosome transport by mediating 'Lys-33'-linked ubiquitination of CORO7, promoting interaction between CORO7 and EPS15, thereby facilitating actin polymerization and post-Golgi trafficking. Also acts as a regulator of endothelial migration during angiogenesis by controlling the activation of Rho GTPases. The BCR(KLHL20) E3 ubiquitin ligase complex acts as a regulator of neurite outgrowth by mediating ubiquitination and degradation of PDZ-RhoGEF/ARHGEF11. This chain is Kelch-like protein 20 (KLHL20), found in Bos taurus (Bovine).